The chain runs to 173 residues: Shikimate kinase 2 (173 aa).

12–17 (GCGKTT) is an ATP binding site. The Mg(2+) site is built by threonine 16 and aspartate 32. Substrate contacts are provided by aspartate 34, arginine 58, and glycine 79. The interval 112–126 (EENPQDNQRPTLTGR) is LID domain. Arginine 120 serves as a coordination point for ATP. Position 139 (arginine 139) interacts with substrate. An ATP-binding site is contributed by glutamine 155.

Belongs to the shikimate kinase family. AroL subfamily. In terms of assembly, monomer. It depends on Mg(2+) as a cofactor.

It localises to the cytoplasm. It catalyses the reaction shikimate + ATP = 3-phosphoshikimate + ADP + H(+). It functions in the pathway metabolic intermediate biosynthesis; chorismate biosynthesis; chorismate from D-erythrose 4-phosphate and phosphoenolpyruvate: step 5/7. In terms of biological role, catalyzes the specific phosphorylation of the 3-hydroxyl group of shikimic acid using ATP as a cosubstrate. The sequence is that of Shikimate kinase 2 from Pectobacterium atrosepticum (strain SCRI 1043 / ATCC BAA-672) (Erwinia carotovora subsp. atroseptica).